Reading from the N-terminus, the 60-residue chain is MDKLKVTLIRSVIGRPQNQRDIVKGLGLGRVNSSVVVPDNAAMRGAIRKINHLVDVELAK.

It belongs to the universal ribosomal protein uL30 family. As to quaternary structure, part of the 50S ribosomal subunit.

The sequence is that of Large ribosomal subunit protein uL30 from Ligilactobacillus salivarius (strain UCC118) (Lactobacillus salivarius).